The sequence spans 226 residues: ATP synthase F(0) complex subunit a (226 aa).

The next 6 membrane-spanning stretches (helical) occupy residues 6 to 26 (FASF…IIMF), 68 to 88 (WSLM…LGLL), 97 to 117 (QLSM…FTGF), 136 to 156 (LLIP…PVAL), 164 to 184 (ITAG…LLNI), and 189 to 209 (AFIT…VALI).

The protein belongs to the ATPase A chain family. Component of the ATP synthase complex composed at least of ATP5F1A/subunit alpha, ATP5F1B/subunit beta, ATP5MC1/subunit c (homooctomer), MT-ATP6/subunit a, MT-ATP8/subunit 8, ATP5ME/subunit e, ATP5MF/subunit f, ATP5MG/subunit g, ATP5MK/subunit k, ATP5MJ/subunit j, ATP5F1C/subunit gamma, ATP5F1D/subunit delta, ATP5F1E/subunit epsilon, ATP5PF/subunit F6, ATP5PB/subunit b, ATP5PD/subunit d, ATP5PO/subunit OSCP. ATP synthase complex consists of a soluble F(1) head domain (subunits alpha(3) and beta(3)) - the catalytic core - and a membrane F(0) domain - the membrane proton channel (subunits c, a, 8, e, f, g, k and j). These two domains are linked by a central stalk (subunits gamma, delta, and epsilon) rotating inside the F1 region and a stationary peripheral stalk (subunits F6, b, d, and OSCP). Interacts with DNAJC30; interaction is direct.

It is found in the mitochondrion inner membrane. It carries out the reaction H(+)(in) = H(+)(out). In terms of biological role, subunit a, of the mitochondrial membrane ATP synthase complex (F(1)F(0) ATP synthase or Complex V) that produces ATP from ADP in the presence of a proton gradient across the membrane which is generated by electron transport complexes of the respiratory chain. ATP synthase complex consist of a soluble F(1) head domain - the catalytic core - and a membrane F(1) domain - the membrane proton channel. These two domains are linked by a central stalk rotating inside the F(1) region and a stationary peripheral stalk. During catalysis, ATP synthesis in the catalytic domain of F(1) is coupled via a rotary mechanism of the central stalk subunits to proton translocation. With the subunit c (ATP5MC1), forms the proton-conducting channel in the F(0) domain, that contains two crucial half-channels (inlet and outlet) that facilitate proton movement from the mitochondrial intermembrane space (IMS) into the matrix. Protons are taken up via the inlet half-channel and released through the outlet half-channel, following a Grotthuss mechanism. In Sus scrofa (Pig), this protein is ATP synthase F(0) complex subunit a.